The chain runs to 790 residues: Phenylalanine--tRNA ligase beta subunit (790 aa).

The 116-residue stretch at proline 39 to cysteine 154 folds into the tRNA-binding domain. A B5 domain is found at phenylalanine 404 to proline 483. 4 residues coordinate Mg(2+): aspartate 457, aspartate 463, glutamate 466, and glutamate 467. The FDX-ACB domain occupies proline 694–serine 790.

The protein belongs to the phenylalanyl-tRNA synthetase beta subunit family. Type 1 subfamily. Tetramer of two alpha and two beta subunits. Mg(2+) serves as cofactor.

The protein resides in the cytoplasm. The enzyme catalyses tRNA(Phe) + L-phenylalanine + ATP = L-phenylalanyl-tRNA(Phe) + AMP + diphosphate + H(+). This Chlamydia trachomatis serovar D (strain ATCC VR-885 / DSM 19411 / UW-3/Cx) protein is Phenylalanine--tRNA ligase beta subunit (pheT).